The sequence spans 157 residues: Probable succinate transporter subunit YjjB (157 aa).

4 helical membrane passes run 6–26 (FFMALMQDMILSAIPAVGFAM), 55–75 (AGFNIEWSTFMASLLVGSIGI), 87–107 (VFTVAAVIPMFPGISAYTAMI), and 129–149 (FLKASSIVGALSIGLSVPGLW).

The protein belongs to the ThrE exporter (TC 2.A.79) family. The transporter is composed of YjjB and YjjP.

The protein resides in the cell inner membrane. Involved in succinate export with YjjP. Both proteins are required for export. The chain is Probable succinate transporter subunit YjjB from Salmonella arizonae (strain ATCC BAA-731 / CDC346-86 / RSK2980).